A 164-amino-acid chain; its full sequence is RNA pyrophosphohydrolase (164 aa).

Residues 8–153 (PYRSNVGAAL…KRPIYERLAR (146 aa)) enclose the Nudix hydrolase domain. A Nudix box motif is present at residues 45–66 (GGIDGDEDPAAAVLRELDEEIG).

Belongs to the Nudix hydrolase family. RppH subfamily. Requires a divalent metal cation as cofactor.

In terms of biological role, accelerates the degradation of transcripts by removing pyrophosphate from the 5'-end of triphosphorylated RNA, leading to a more labile monophosphorylated state that can stimulate subsequent ribonuclease cleavage. The polypeptide is RNA pyrophosphohydrolase (Acidiphilium cryptum (strain JF-5)).